Reading from the N-terminus, the 373-residue chain is Glutamine synthetase (373 aa).

Ala2 is modified (N-acetylalanine). Residues 2 to 25 (ATSASSHLNKGIKQVYMSLPQGEK) form a required for glutamine-induced ubiquitination by CRL4(CRBN) and proteasomal degradation region. 2 positions are modified to N6-acetyllysine: Lys11 and Lys14. The GS beta-grasp domain maps to 24–106 (EKVQAMYIWI…VFCEVFKYNR (83 aa)). Tyr104 bears the Phosphotyrosine mark. In terms of domain architecture, GS catalytic spans 113-373 (LRHTCKRIMD…TGDEPFQYKN (261 aa)). Glu134 is an ATP binding site. Glu134, Glu136, Glu196, and Glu203 together coordinate Mn(2+). 203–208 (EFQIGP) contacts ATP. 246-247 (NW) provides a ligand contact to L-glutamate. Mn(2+) is bound at residue His253. Residues 255–257 (NFS), Arg319, and Arg324 contribute to the ATP site. Residue Arg319 participates in L-glutamate binding. 336 to 338 (YFE) contributes to the ADP binding site. Glu338 provides a ligand contact to Mn(2+). Arg340 provides a ligand contact to L-glutamate. Ser343 carries the phosphoserine modification.

Belongs to the glutamine synthetase family. In terms of assembly, decamer; composed of two pentamers. Interacts with PALMD. Interacts with RHOJ. Interacts with BEST2; this interaction tethers a fraction of GLUL to the membrane, causing a decrease of cytosolic glutamine synthase (GS) activity and inhibits the chloride channel activity of BEST2 by affecting the gating at the aperture in the absence of intracellular glutamate. The cofactor is Mg(2+). Mn(2+) is required as a cofactor. In terms of processing, palmitoylated; undergoes autopalmitoylation. Acetylated by EP300/p300; acetylation is stimulated by increased glutamine levels and promotes ubiquitin-mediated proteasomal degradation. Post-translationally, ubiquitinated by ZNRF1. Ubiquitinated by the DCX (DDB1-CUL4-X-box) E3 ubiquitin-protein ligase complex called CRL4(CRBN), leading to proteasomal degradation.

The protein localises to the cytoplasm. Its subcellular location is the cytosol. It is found in the microsome. It localises to the mitochondrion. The protein resides in the cell membrane. It carries out the reaction L-glutamate + NH4(+) + ATP = L-glutamine + ADP + phosphate + H(+). The enzyme catalyses L-cysteinyl-[protein] + hexadecanoyl-CoA = S-hexadecanoyl-L-cysteinyl-[protein] + CoA. Glutamine synthetase activity is inhibited by methionine sulfoximine (MSO). Functionally, glutamine synthetase that catalyzes the ATP-dependent conversion of glutamate and ammonia to glutamine. Its role depends on tissue localization: in the brain, it regulates the levels of toxic ammonia and converts neurotoxic glutamate to harmless glutamine, whereas in the liver, it is one of the enzymes responsible for the removal of ammonia. Plays a key role in ammonium detoxification during erythropoiesis: the glutamine synthetase activity is required to remove ammonium generated by porphobilinogen deaminase (HMBS) during heme biosynthesis to prevent ammonium accumulation and oxidative stress. Essential for proliferation of fetal skin fibroblasts. Independently of its glutamine synthetase activity, required for endothelial cell migration during vascular development. Involved in angiogenesis by regulating membrane localization and activation of the GTPase RHOJ, possibly by promoting RHOJ palmitoylation. May act as a palmitoyltransferase for RHOJ: able to autopalmitoylate and then transfer the palmitoyl group to RHOJ. Plays a role in ribosomal 40S subunit biogenesis. Through the interaction with BEST2, inhibits BEST2 channel activity by affecting the gating at the aperture in the absence of intracellular L-glutamate, but sensitizes BEST2 to intracellular L-glutamate, which promotes the opening of BEST2 and thus relieves its inhibitory effect on BEST2. The sequence is that of Glutamine synthetase from Canis lupus familiaris (Dog).